A 579-amino-acid polypeptide reads, in one-letter code: 2-isopropylmalate synthase (579 aa).

Positions proline 40 to aspartate 314 constitute a Pyruvate carboxyltransferase domain. Mg(2+)-binding residues include aspartate 49, histidine 253, histidine 255, and asparagine 289. The segment at serine 456–alanine 579 is regulatory domain.

This sequence belongs to the alpha-IPM synthase/homocitrate synthase family. LeuA type 2 subfamily. In terms of assembly, homodimer. Requires Mg(2+) as cofactor.

The protein localises to the cytoplasm. It carries out the reaction 3-methyl-2-oxobutanoate + acetyl-CoA + H2O = (2S)-2-isopropylmalate + CoA + H(+). It participates in amino-acid biosynthesis; L-leucine biosynthesis; L-leucine from 3-methyl-2-oxobutanoate: step 1/4. Functionally, catalyzes the condensation of the acetyl group of acetyl-CoA with 3-methyl-2-oxobutanoate (2-ketoisovalerate) to form 3-carboxy-3-hydroxy-4-methylpentanoate (2-isopropylmalate). The protein is 2-isopropylmalate synthase of Paenarthrobacter aurescens (strain TC1).